We begin with the raw amino-acid sequence, 46 residues long: Mu-segestritoxin-Sf1d (46 aa).

Intrachain disulfides connect C3–C19, C10–C22, C18–C42, and C24–C40. The tract at residues 31 to 33 is keys region for toxin activity; that stretch reads RPW.

The protein belongs to the neurotoxin 16 (SFI) family. Expressed by the venom gland.

It localises to the secreted. Its function is as follows. Insecticidal toxin. It inhibits insect voltage-gated sodium channels (Nav) by partially blocking the channel pore in DUM neurons from the American cockroach, not by acting as a gating modifier. The inhibition is only partially reversible after prolonged washout. In vivo, the toxin causes flaccid paralysis followed by death when injected into Heliothis virescens larvae. It also causes uncoordinated movements followed by full paralysis to sheep blowflies (Lucilia cuprina). When the toxin is fused to snowdrop lectin, it is orally active against larvae of the tomato moth (Laconobia oleracea), the rice brown planthopper (Nilaparvata lugens), and the peach-potato aphid (Myzus persicae). This chain is Mu-segestritoxin-Sf1d, found in Segestria florentina (Tube-web spider).